The following is a 195-amino-acid chain: HTH-type transcriptional regulator BetI (195 aa).

Positions 8–68 (PIRRQQLIEA…ATMRYLISHL (61 aa)) constitute an HTH tetR-type domain. The segment at residues 31 to 50 (SIVQIARRAGVSNGIISHYF) is a DNA-binding region (H-T-H motif).

It participates in amine and polyamine biosynthesis; betaine biosynthesis via choline pathway [regulation]. In terms of biological role, repressor involved in the biosynthesis of the osmoprotectant glycine betaine. It represses transcription of the choline transporter BetT and the genes of BetAB involved in the synthesis of glycine betaine. This chain is HTH-type transcriptional regulator BetI, found in Pectobacterium atrosepticum (strain SCRI 1043 / ATCC BAA-672) (Erwinia carotovora subsp. atroseptica).